A 156-amino-acid polypeptide reads, in one-letter code: uncharacterized protein (156 aa).

This is an uncharacterized protein from Saccharolobus islandicus (Sulfolobus islandicus).